The following is a 410-amino-acid chain: E3 SUMO-protein ligase EGR2 (410 aa).

A compositionally biased stretch (low complexity) spans 68–83 (PPASTTASSSVTSASP). Disordered regions lie at residues 68-95 (PPAS…GVCT), 101-120 (PELD…SGCT), and 127-151 (PSAF…SYPS). The short motif at 104–107 (DHLY) is the HCFC1-binding-motif (HBM) element. Positions 127–143 (PSAFLSPPTTSTSSLAY) are enriched in low complexity. Lysine 188 is modified (N6-acetyllysine). A disordered region spans residues 217 to 286 (PSAGVTGPGA…PYPCPAEGCD (70 aa)). Residues 222–231 (TGPGASGGSE) show a composition bias toward gly residues. The segment covering 237 to 248 (GSGSAAVTTSPY) has biased composition (polar residues). 3 consecutive C2H2-type zinc fingers follow at residues 278 to 302 (YPCP…IRIH), 308 to 330 (FQCR…IRTH), and 336 to 358 (FACD…TKIH). The segment at 349–410 (DERKRHTKIH…LACTSRTRTP (62 aa)) is disordered. Basic residues predominate over residues 353–363 (RHTKIHLRQKE). The segment covering 367–380 (SAPSSSASAQPSAS) has biased composition (low complexity).

Belongs to the EGR C2H2-type zinc-finger protein family. As to quaternary structure, interacts with HCFC1. Interacts with WWP2. Interacts with UBC9. Interacts with CITED1. Interacts (via phosphorylated form) with SFN. Post-translationally, ubiquitinated by WWP2 leading to proteasomal degradation. In terms of processing, acetylated. May be deacetylated by HDAC6, HDAC10 or SIRT1.

The protein localises to the nucleus. The protein operates within protein modification; protein sumoylation. Sequence-specific DNA-binding transcription factor. Plays a role in hindbrain segmentation by regulating the expression of a subset of homeobox containing genes and in Schwann cell myelination by regulating the expression of genes involved in the formation and maintenance of myelin. Binds to two EGR2-consensus sites EGR2A (5'-CTGTAGGAG-3') and EGR2B (5'-ATGTAGGTG-3') in the HOXB3 enhancer and promotes HOXB3 transcriptional activation. Binds to specific DNA sites located in the promoter region of HOXA4, HOXB2 and ERBB2. Regulates hindbrain segmentation by controlling the expression of Hox genes, such as HOXA4, HOXB3 and HOXB2, and thereby specifying odd and even rhombomeres. Promotes the expression of HOXB3 in the rhombomere r5 in the hindbrain. Regulates myelination in the peripheral nervous system after birth, possibly by regulating the expression of myelin proteins, such as MPZ, and by promoting the differentiation of Schwann cells. Involved in the development of the jaw openener musculature, probably by playing a role in its innervation through trigeminal motor neurons. May play a role in adipogenesis, possibly by regulating the expression of CEBPB. Functionally, E3 SUMO-protein ligase helping SUMO1 conjugation to its coregulators NAB1 and NAB2, whose sumoylation down-regulates EGR2 transcriptional activity. This chain is E3 SUMO-protein ligase EGR2 (EGR2), found in Cricetulus griseus (Chinese hamster).